Consider the following 77-residue polypeptide: Secapin (77 aa).

Positions 1–32 are cleaved as a signal peptide; it reads MKNYSKNATHLITVLLFSFVVILLIIPSKCEA. Residues 33-52 constitute a propeptide that is removed on maturation; sequence VSNDMQPLEARSADLVPEPR. Cys61 and Cys72 are oxidised to a cystine.

This sequence belongs to the secapin family. As to expression, expressed by the venom gland.

The protein resides in the secreted. Its function is as follows. Serine protease inhibitor which exhibits antifibrinolytic, antielastolytic and antimicrobial activities. Displays antimicrobial activity against bacteria and fungi. Likely functions in the innate immune response to microbial infection and possibly in the venom, as an antifibrinolytic agent. Not toxic to mice but does induce slight sedation at higher doses (from 40 mg/kg). At a dose of 80 mg/kg, sedation occurs 15 minutes after injection and is accompanied by piloerection and hypothermia. The protein is Secapin of Apis mellifera (Honeybee).